A 362-amino-acid polypeptide reads, in one-letter code: Spermidine/putrescine import ATP-binding protein PotA (362 aa).

The 232-residue stretch at 4 to 235 (IKLDHITKQY…PVNDFVARFI (232 aa)) folds into the ABC transporter domain. 37-44 (GPSGSGKT) contributes to the ATP binding site.

This sequence belongs to the ABC transporter superfamily. Spermidine/putrescine importer (TC 3.A.1.11.1) family. The complex is composed of two ATP-binding proteins (PotA), two transmembrane proteins (PotB and PotC) and a solute-binding protein (PotD).

It is found in the cell membrane. It carries out the reaction ATP + H2O + polyamine-[polyamine-binding protein]Side 1 = ADP + phosphate + polyamineSide 2 + [polyamine-binding protein]Side 1.. Its function is as follows. Part of the ABC transporter complex PotABCD involved in spermidine/putrescine import. Responsible for energy coupling to the transport system. In Lactobacillus delbrueckii subsp. bulgaricus (strain ATCC 11842 / DSM 20081 / BCRC 10696 / JCM 1002 / NBRC 13953 / NCIMB 11778 / NCTC 12712 / WDCM 00102 / Lb 14), this protein is Spermidine/putrescine import ATP-binding protein PotA.